The sequence spans 147 residues: Hemoglobin subunit gamma (147 aa).

One can recognise a Globin domain in the interval 3-147 (HFTAEEKAII…VAIALGHKYH (145 aa)). Heme b contacts are provided by H64 and H93.

This sequence belongs to the globin family. As to quaternary structure, heterotetramer of two alpha chains and two gamma chains in fetal hemoglobin (Hb F). Red blood cells.

Functionally, gamma chains make up the fetal hemoglobin F, in combination with alpha chains. The polypeptide is Hemoglobin subunit gamma (HBG) (Cephalopachus bancanus (Western tarsier)).